The primary structure comprises 504 residues: 26S proteasome non-ATPase regulatory subunit 3 (504 aa).

Positions A254–S433 constitute a PCI domain.

It belongs to the proteasome subunit S3 family. In terms of assembly, the 26S proteasome is composed of a core protease, known as the 20S proteasome, capped at one or both ends by the 19S regulatory complex (RC). The RC is composed of at least 18 different subunits in two subcomplexes, the base and the lid, which form the portions proximal and distal to the 20S proteolytic core, respectively.

Acts as a regulatory subunit of the 26 proteasome which is involved in the ATP-dependent degradation of ubiquitinated proteins. The sequence is that of 26S proteasome non-ATPase regulatory subunit 3 (rpn-3) from Caenorhabditis elegans.